The chain runs to 212 residues: MTTPIIVTGTDTGVGKTVFSAALAGALEATYWKPVQAGLDEETDRLAVLRLSGLPETRLLAEAYRLTTPASPHLAAEIDGVAIDPEALVLPDTQGPLVVEGAGGLLVPLTRHVTYIDVFATWRAPVVLCARTTLGTINHTLLSIEALRARAIPLLGIAFIGDENAESERIIVELGRARRLGRLPHLAQLTTDALRAAFARNFNTADFLKETA.

An ATP-binding site is contributed by 13-18; sequence GVGKTV. Mg(2+) is bound at residue threonine 17. Lysine 33 is a catalytic residue. Glutamate 100 provides a ligand contact to Mg(2+). Residues 100–103 and 184–186 each bind ATP; these read EGAG and PHL.

Belongs to the dethiobiotin synthetase family. In terms of assembly, homodimer. Mg(2+) is required as a cofactor.

The protein resides in the cytoplasm. It catalyses the reaction (7R,8S)-7,8-diammoniononanoate + CO2 + ATP = (4R,5S)-dethiobiotin + ADP + phosphate + 3 H(+). The protein operates within cofactor biosynthesis; biotin biosynthesis; biotin from 7,8-diaminononanoate: step 1/2. Catalyzes a mechanistically unusual reaction, the ATP-dependent insertion of CO2 between the N7 and N8 nitrogen atoms of 7,8-diaminopelargonic acid (DAPA, also called 7,8-diammoniononanoate) to form a ureido ring. This is ATP-dependent dethiobiotin synthetase BioD from Rhodopseudomonas palustris (strain BisB5).